We begin with the raw amino-acid sequence, 186 residues long: dCTP deaminase (186 aa).

107–112 is a dCTP binding site; sequence KSTYAR. E133 functions as the Proton donor/acceptor in the catalytic mechanism. DCTP is bound by residues Q152, Y166, and Q176.

This sequence belongs to the dCTP deaminase family. In terms of assembly, homotrimer.

The enzyme catalyses dCTP + H2O + H(+) = dUTP + NH4(+). It functions in the pathway pyrimidine metabolism; dUMP biosynthesis; dUMP from dCTP (dUTP route): step 1/2. Catalyzes the deamination of dCTP to dUTP. This Campylobacter jejuni subsp. jejuni serotype O:2 (strain ATCC 700819 / NCTC 11168) protein is dCTP deaminase.